The sequence spans 598 residues: Polypeptide N-acetylgalactosaminyltransferase 17 (598 aa).

At 1–6 (MASLRR) the chain is on the cytoplasmic side. The chain crosses the membrane as a helical; Signal-anchor for type II membrane protein span at residues 7 to 27 (VKVLLVLNLIAVAGFVIFLAK). The Lumenal segment spans residues 28–598 (CRPIAVRSGD…QRWAIKNPIK (571 aa)). The N-linked (GlcNAc...) asparagine glycan is linked to asparagine 50. Disulfide bonds link cysteine 142–cysteine 373 and cysteine 364–cysteine 443. The segment at 151–262 (LPQISIIFIF…AGWAEPVLSR (112 aa)) is catalytic subdomain A. 2 residues coordinate substrate: aspartate 192 and arginine 223. Mn(2+)-binding residues include aspartate 246, histidine 248, and histidine 378. The interval 319–381 (PIRTPAMIGC…PCSRVAHIER (63 aa)) is catalytic subdomain B. Substrate-binding residues include arginine 381 and tyrosine 386. Residues asparagine 461 and asparagine 486 are each glycosylated (N-linked (GlcNAc...) asparagine). The region spanning 465-594 (AYGELRNNKA…SCTGQRWAIK (130 aa)) is the Ricin B-type lectin domain. 3 cysteine pairs are disulfide-bonded: cysteine 478–cysteine 494, cysteine 526–cysteine 541, and cysteine 568–cysteine 586.

Belongs to the glycosyltransferase 2 family. GalNAc-T subfamily. The cofactor is Mn(2+).

It localises to the golgi apparatus membrane. The catalysed reaction is L-seryl-[protein] + UDP-N-acetyl-alpha-D-galactosamine = a 3-O-[N-acetyl-alpha-D-galactosaminyl]-L-seryl-[protein] + UDP + H(+). It carries out the reaction L-threonyl-[protein] + UDP-N-acetyl-alpha-D-galactosamine = a 3-O-[N-acetyl-alpha-D-galactosaminyl]-L-threonyl-[protein] + UDP + H(+). The protein operates within protein modification; protein glycosylation. Functionally, may catalyze the initial reaction in O-linked oligosaccharide biosynthesis, the transfer of an N-acetyl-D-galactosamine residue to a serine or threonine residue on the protein receptor. The chain is Polypeptide N-acetylgalactosaminyltransferase 17 from Mus musculus (Mouse).